The following is a 199-amino-acid chain: Thioredoxin reductase-like selenoprotein T (199 aa).

The N-terminal stretch at 1–24 is a signal peptide; the sequence is MRAAGLGLGIGLLLLAALAGPGGS. Residues 50–53 constitute a cross-link (cysteinyl-selenocysteine (Cys-Sec)); sequence CVSU. Position 53 (Sec53) is a non-standard amino acid, selenocysteine. A helical membrane pass occupies residues 95-115; the sequence is VFKLVLIGLIIVGKDPFAFFG.

The protein belongs to the SelWTH family. Selenoprotein T subfamily. May contain a selenide-sulfide bond between Cys-50 and Sec-53. This bond is speculated to serve as redox-active pair.

It is found in the endoplasmic reticulum membrane. The catalysed reaction is [thioredoxin]-dithiol + NADP(+) = [thioredoxin]-disulfide + NADPH + H(+). In terms of biological role, selenoprotein with thioredoxin reductase-like oxidoreductase activity. In Gallus gallus (Chicken), this protein is Thioredoxin reductase-like selenoprotein T.